The sequence spans 364 residues: Probable dual-specificity RNA methyltransferase RlmN (364 aa).

Glu-106 acts as the Proton acceptor in catalysis. The region spanning 112 to 350 is the Radical SAM core domain; it reads YPQRNTVCIS…SCTVRDTRGR (239 aa). A disulfide bridge links Cys-119 with Cys-356. [4Fe-4S] cluster is bound by residues Cys-126, Cys-130, and Cys-133. S-adenosyl-L-methionine is bound by residues 177-178, Ser-211, 234-236, and Asn-313; these read GE and SLH. Residue Cys-356 is the S-methylcysteine intermediate of the active site.

This sequence belongs to the radical SAM superfamily. RlmN family. The cofactor is [4Fe-4S] cluster.

It is found in the cytoplasm. It carries out the reaction adenosine(2503) in 23S rRNA + 2 reduced [2Fe-2S]-[ferredoxin] + 2 S-adenosyl-L-methionine = 2-methyladenosine(2503) in 23S rRNA + 5'-deoxyadenosine + L-methionine + 2 oxidized [2Fe-2S]-[ferredoxin] + S-adenosyl-L-homocysteine. It catalyses the reaction adenosine(37) in tRNA + 2 reduced [2Fe-2S]-[ferredoxin] + 2 S-adenosyl-L-methionine = 2-methyladenosine(37) in tRNA + 5'-deoxyadenosine + L-methionine + 2 oxidized [2Fe-2S]-[ferredoxin] + S-adenosyl-L-homocysteine. Its function is as follows. Specifically methylates position 2 of adenine 2503 in 23S rRNA and position 2 of adenine 37 in tRNAs. The chain is Probable dual-specificity RNA methyltransferase RlmN from Mycobacterium marinum (strain ATCC BAA-535 / M).